The primary structure comprises 372 residues: 4-hydroxy-3-methylbut-2-en-1-yl diphosphate synthase (flavodoxin) (372 aa).

Residues C270, C273, C305, and E312 each contribute to the [4Fe-4S] cluster site.

It belongs to the IspG family. It depends on [4Fe-4S] cluster as a cofactor.

The catalysed reaction is (2E)-4-hydroxy-3-methylbut-2-enyl diphosphate + oxidized [flavodoxin] + H2O + 2 H(+) = 2-C-methyl-D-erythritol 2,4-cyclic diphosphate + reduced [flavodoxin]. Its pathway is isoprenoid biosynthesis; isopentenyl diphosphate biosynthesis via DXP pathway; isopentenyl diphosphate from 1-deoxy-D-xylulose 5-phosphate: step 5/6. In terms of biological role, converts 2C-methyl-D-erythritol 2,4-cyclodiphosphate (ME-2,4cPP) into 1-hydroxy-2-methyl-2-(E)-butenyl 4-diphosphate. This is 4-hydroxy-3-methylbut-2-en-1-yl diphosphate synthase (flavodoxin) from Vibrio vulnificus (strain CMCP6).